The primary structure comprises 775 residues: MEAPYSMTAHYDEFQEVKYESRCGTGGARGTSLPPGFPRSSGRSASGARSGLPRWNRREVCLLSGLVFAAGLCAILAAMLALKYLGPGAAGTGGACPEGCPERKAFARAARFLSANLDASIDPCQDFYSFACGGWLRRHAIPDDKLTYGTIAAIGEQNEERLRRLLARPTGGPGGAAQRKVRAFFRSCLDMREIERLGPRPMLEVIEDCGGWDLGGAADRPGAARWDLNRLLYKAQGVYSAAALFSLTVSLDDRNSSRYVIRIDQDGLTLPERTLYLAQDEGSEKVLAAYKVFMERLLRLLGADAVEQKAQEILQLEQRLANISVSEYDDLRRDVSSVYNKVTLGQLQKITPHLQWKWLLDQIFQEDFSEEEEVVLLATDYMQQVSQLIRSTPRRILHNYLVWRVVVVLSEHLSPPFREALHELAKEMEGNDKPQELARVCLGQANRHFGMALGALFVHEHFSAASKAKVQQLVEDIKYILGQRLEELDWMDAQTKAAARAKLQYMMVMVGYPDFLLKPEAVDKEYEFEVHEKTYLKNILNSIRFSIQLSVKKIRQEVDKSTWLLPPQALNAYYLPNKNQMVFPAGILQPTLYDPDFPQSLNYGGIGTIIGHELTHGYDDWGGQYDRSGNLLHWWTEASYSRFLHKAECIVRLYDNFTVYNQRVNGKHTLGENIADMGGLKLAYYAYQKWVREHGPEHPLHRLKYTHNQLFFIAFAQNWCIKRRSQSIYLQVLTDKHAPEHYRVLGSVSQFEEFGRAFHCPKDSPMNPVHKCSVW.

The Cytoplasmic segment spans residues 1–61; the sequence is MEAPYSMTAH…LPRWNRREVC (61 aa). The segment at 23-51 is disordered; it reads CGTGGARGTSLPPGFPRSSGRSASGARSG. The span at 32–51 shows a compositional bias: low complexity; it reads SLPPGFPRSSGRSASGARSG. The helical; Signal-anchor for type II membrane protein transmembrane segment at 62 to 82 threads the bilayer; sequence LLSGLVFAAGLCAILAAMLAL. Residues 83-775 are Lumenal-facing; the sequence is KYLGPGAAGT…MNPVHKCSVW (693 aa). One can recognise a Peptidase M13 domain in the interval 99-775; the sequence is GCPERKAFAR…MNPVHKCSVW (677 aa). 4 cysteine pairs are disulfide-bonded: C124–C760, C132–C720, C188–C441, and C649–C772. 2 N-linked (GlcNAc...) asparagine glycosylation sites follow: N255 and N322. A Zn(2+)-binding site is contributed by H612. Residue E613 is part of the active site. Position 616 (H616) interacts with Zn(2+). A glycan (N-linked (GlcNAc...) asparagine) is linked at N656. Position 672 (E672) interacts with Zn(2+). D676 (proton donor) is an active-site residue.

The protein belongs to the peptidase M13 family. Requires Zn(2+) as cofactor. Highly expressed in the CNS, in particular in neurons of the caudate putamen, diagonal band, the paraventricular nucleus of the thalamus, part of the hypothalamus, in cranial motor nuclei, inferior olive, and substantia gelatinosa of the spinal tract trigeminal nucleus. Not detected in cerebral cortex, hippocampus and cerebellum.

The protein resides in the membrane. Its function is as follows. May contribute to the degradation of peptide hormones and be involved in the inactivation of neuronal peptides. Cleaves the synthetic substrate Z-Gly-Gly-Leu-pNA and releases pNA. May protect against C2-ceramide-induced apoptosis. The sequence is that of Endothelin-converting enzyme-like 1 (Ecel1) from Rattus norvegicus (Rat).